The chain runs to 254 residues: Alcohol dehydrogenase (254 aa).

Phe-10–Leu-33 lines the NAD(+) pocket. Ser-138 contacts substrate. Tyr-151 acts as the Proton acceptor in catalysis.

It belongs to the short-chain dehydrogenases/reductases (SDR) family. In terms of assembly, homodimer.

It carries out the reaction a primary alcohol + NAD(+) = an aldehyde + NADH + H(+). It catalyses the reaction a secondary alcohol + NAD(+) = a ketone + NADH + H(+). This chain is Alcohol dehydrogenase (Adh), found in Drosophila adiastola (Fruit fly).